The chain runs to 792 residues: Phenylalanine--tRNA ligase beta subunit (792 aa).

The region spanning Gly39 to Ala147 is the tRNA-binding domain. Residues Pro400–Thr475 form the B5 domain. 4 residues coordinate Mg(2+): Asp453, Asp459, Glu462, and Asp463. The FDX-ACB domain occupies Ser698–Arg791.

This sequence belongs to the phenylalanyl-tRNA synthetase beta subunit family. Type 1 subfamily. As to quaternary structure, tetramer of two alpha and two beta subunits. Mg(2+) is required as a cofactor.

Its subcellular location is the cytoplasm. The enzyme catalyses tRNA(Phe) + L-phenylalanine + ATP = L-phenylalanyl-tRNA(Phe) + AMP + diphosphate + H(+). This chain is Phenylalanine--tRNA ligase beta subunit, found in Xanthomonas oryzae pv. oryzae (strain KACC10331 / KXO85).